Reading from the N-terminus, the 190-residue chain is Peptidyl-tRNA hydrolase (190 aa).

Phenylalanine 14 provides a ligand contact to tRNA. Catalysis depends on histidine 19, which acts as the Proton acceptor. Methionine 64, asparagine 66, and asparagine 112 together coordinate tRNA.

Belongs to the PTH family. In terms of assembly, monomer.

It localises to the cytoplasm. It catalyses the reaction an N-acyl-L-alpha-aminoacyl-tRNA + H2O = an N-acyl-L-amino acid + a tRNA + H(+). Its function is as follows. Hydrolyzes ribosome-free peptidyl-tRNAs (with 1 or more amino acids incorporated), which drop off the ribosome during protein synthesis, or as a result of ribosome stalling. In terms of biological role, catalyzes the release of premature peptidyl moieties from peptidyl-tRNA molecules trapped in stalled 50S ribosomal subunits, and thus maintains levels of free tRNAs and 50S ribosomes. The sequence is that of Peptidyl-tRNA hydrolase from Staphylococcus aureus (strain bovine RF122 / ET3-1).